Here is a 119-residue protein sequence, read N- to C-terminus: Protein TusC (119 aa).

It belongs to the DsrF/TusC family. In terms of assembly, heterohexamer, formed by a dimer of trimers. The hexameric TusBCD complex contains 2 copies each of TusB, TusC and TusD. The TusBCD complex interacts with TusE.

The protein resides in the cytoplasm. Its function is as follows. Part of a sulfur-relay system required for 2-thiolation of 5-methylaminomethyl-2-thiouridine (mnm(5)s(2)U) at tRNA wobble positions. The chain is Protein TusC from Buchnera aphidicola subsp. Acyrthosiphon pisum (strain 5A).